The sequence spans 186 residues: Adenylate kinase (186 aa).

10-15 (GSGKGT) serves as a coordination point for ATP. The segment at 30 to 55 (ATGDVFRERMKTDMALRDIVSSGGYV) is NMP. AMP is bound by residues T31, R36, 53-55 (GYV), 81-84 (GYPR), and Q88. The LID stretch occupies residues 122–132 (ARSKESGRTDD). Position 123 (R123) interacts with ATP. 2 residues coordinate AMP: R129 and R140. Residue K168 participates in ATP binding.

Belongs to the adenylate kinase family. Monomer.

The protein resides in the cytoplasm. It catalyses the reaction AMP + ATP = 2 ADP. The protein operates within purine metabolism; AMP biosynthesis via salvage pathway; AMP from ADP: step 1/1. In terms of biological role, catalyzes the reversible transfer of the terminal phosphate group between ATP and AMP. Plays an important role in cellular energy homeostasis and in adenine nucleotide metabolism. This Tropheryma whipplei (strain TW08/27) (Whipple's bacillus) protein is Adenylate kinase.